The primary structure comprises 356 residues: tRNA-specific 2-thiouridylase MnmA 2 (356 aa).

ATP is bound by residues 8-15 (GMSGGVDS) and Met34. Catalysis depends on Cys103, which acts as the Nucleophile. Cys103 and Cys199 are joined by a disulfide. An ATP-binding site is contributed by Gly127. The interaction with tRNA stretch occupies residues 149 to 151 (KDQ). Catalysis depends on Cys199, which acts as the Cysteine persulfide intermediate. Positions 305–306 (RY) are interaction with tRNA.

The protein belongs to the MnmA/TRMU family.

The protein resides in the cytoplasm. The catalysed reaction is S-sulfanyl-L-cysteinyl-[protein] + uridine(34) in tRNA + AH2 + ATP = 2-thiouridine(34) in tRNA + L-cysteinyl-[protein] + A + AMP + diphosphate + H(+). Its function is as follows. Catalyzes the 2-thiolation of uridine at the wobble position (U34) of tRNA, leading to the formation of s(2)U34. This chain is tRNA-specific 2-thiouridylase MnmA 2, found in Clostridium botulinum (strain Okra / Type B1).